Reading from the N-terminus, the 368-residue chain is tRNA-specific 2-thiouridylase MnmA (368 aa).

Residues 23-30 (ALSGGVDS) and Leu-49 each bind ATP. The Nucleophile role is filled by Cys-110. Residues Cys-110 and Cys-209 are joined by a disulfide bond. An ATP-binding site is contributed by Gly-135. The segment at 159–161 (KDQ) is interaction with tRNA. Cys-209 functions as the Cysteine persulfide intermediate in the catalytic mechanism. The segment at 314–315 (RY) is interaction with tRNA.

Belongs to the MnmA/TRMU family.

Its subcellular location is the cytoplasm. The enzyme catalyses S-sulfanyl-L-cysteinyl-[protein] + uridine(34) in tRNA + AH2 + ATP = 2-thiouridine(34) in tRNA + L-cysteinyl-[protein] + A + AMP + diphosphate + H(+). Functionally, catalyzes the 2-thiolation of uridine at the wobble position (U34) of tRNA, leading to the formation of s(2)U34. In Synechococcus sp. (strain JA-2-3B'a(2-13)) (Cyanobacteria bacterium Yellowstone B-Prime), this protein is tRNA-specific 2-thiouridylase MnmA.